Reading from the N-terminus, the 548-residue chain is Chaperonin GroEL (548 aa).

Residues 30–33 (TLGP), Lys-51, 87–91 (DGTTT), Gly-415, 479–481 (NAA), and Asp-495 contribute to the ATP site. The tract at residues 524–548 (LPKEDKSSDSSSSPAGGMGGMGGMM) is disordered. The segment covering 539–548 (GGMGGMGGMM) has biased composition (gly residues).

It belongs to the chaperonin (HSP60) family. As to quaternary structure, forms a cylinder of 14 subunits composed of two heptameric rings stacked back-to-back. Interacts with the co-chaperonin GroES.

The protein localises to the cytoplasm. It carries out the reaction ATP + H2O + a folded polypeptide = ADP + phosphate + an unfolded polypeptide.. Its function is as follows. Together with its co-chaperonin GroES, plays an essential role in assisting protein folding. The GroEL-GroES system forms a nano-cage that allows encapsulation of the non-native substrate proteins and provides a physical environment optimized to promote and accelerate protein folding. The sequence is that of Chaperonin GroEL from Buchnera aphidicola subsp. Acyrthosiphon pisum (strain Tuc7).